The sequence spans 401 residues: Methionine import ATP-binding protein MetN (401 aa).

Positions 6–248 (ITFDHVVKEF…PQQPVTKRFI (243 aa)) constitute an ABC transporter domain. ATP is bound at residue 45-52 (GYSGAGKS).

This sequence belongs to the ABC transporter superfamily. Methionine importer (TC 3.A.1.24) family. The complex is composed of two ATP-binding proteins (MetN), two transmembrane proteins (MetI) and a solute-binding protein (MetQ).

The protein localises to the cell membrane. The catalysed reaction is L-methionine(out) + ATP + H2O = L-methionine(in) + ADP + phosphate + H(+). It carries out the reaction D-methionine(out) + ATP + H2O = D-methionine(in) + ADP + phosphate + H(+). Part of the ABC transporter complex MetNIQ involved in methionine import. Responsible for energy coupling to the transport system. The chain is Methionine import ATP-binding protein MetN from Bifidobacterium longum (strain NCC 2705).